A 518-amino-acid polypeptide reads, in one-letter code: Bifunctional purine biosynthesis protein PurH (518 aa).

In terms of domain architecture, MGS-like spans 1–146; it reads MGRMALLSTS…KNHAHVTVLV (146 aa).

Belongs to the PurH family.

It carries out the reaction (6R)-10-formyltetrahydrofolate + 5-amino-1-(5-phospho-beta-D-ribosyl)imidazole-4-carboxamide = 5-formamido-1-(5-phospho-D-ribosyl)imidazole-4-carboxamide + (6S)-5,6,7,8-tetrahydrofolate. The enzyme catalyses IMP + H2O = 5-formamido-1-(5-phospho-D-ribosyl)imidazole-4-carboxamide. It functions in the pathway purine metabolism; IMP biosynthesis via de novo pathway; 5-formamido-1-(5-phospho-D-ribosyl)imidazole-4-carboxamide from 5-amino-1-(5-phospho-D-ribosyl)imidazole-4-carboxamide (10-formyl THF route): step 1/1. Its pathway is purine metabolism; IMP biosynthesis via de novo pathway; IMP from 5-formamido-1-(5-phospho-D-ribosyl)imidazole-4-carboxamide: step 1/1. This Thermosynechococcus vestitus (strain NIES-2133 / IAM M-273 / BP-1) protein is Bifunctional purine biosynthesis protein PurH.